The sequence spans 812 residues: ATP-dependent DNA helicase PIF3 (812 aa).

247 to 254 (GSAGTGKT) serves as a coordination point for ATP. Residues 741–761 (HLVYVACSRVRSMDQLIVRNV) mediate DNA binding.

This sequence belongs to the helicase family. PIF1 subfamily. Monomer. The cofactor is Mg(2+).

It is found in the cytoplasm. It carries out the reaction Couples ATP hydrolysis with the unwinding of duplex DNA at the replication fork by translocating in the 5'-3' direction. This creates two antiparallel DNA single strands (ssDNA). The leading ssDNA polymer is the template for DNA polymerase III holoenzyme which synthesizes a continuous strand.. The catalysed reaction is ATP + H2O = ADP + phosphate + H(+). Functionally, DNA-dependent ATPase and 5'-3' DNA helicase required for the maintenance of genome stability. The sequence is that of ATP-dependent DNA helicase PIF3 from Trypanosoma brucei brucei (strain 927/4 GUTat10.1).